Here is a 967-residue protein sequence, read N- to C-terminus: Glutamate receptor 2.6 (967 aa).

An N-terminal signal peptide occupies residues 1–31 (MSLFNHLLSRALPLWLLFFINFLVLLGKSQQ). Topologically, residues 32–590 (EVLQVQVGIV…WVFLKPLTRE (559 aa)) are extracellular. N-linked (GlcNAc...) asparagine glycans are attached at residues asparagine 45, asparagine 57, asparagine 121, asparagine 336, asparagine 345, asparagine 424, and asparagine 550. Residues 591–611 (LWFLTAASFLYIGIMVWIFEY) traverse the membrane as a helical segment. Over 612-621 (QASGDFRKQS) the chain is Cytoplasmic. Residues 622–642 (IINKISNVFYFSFSTLFFAHM) traverse the membrane as a helical segment. Residues 643–651 (RPSESIFTR) are Cytoplasmic-facing. A helical transmembrane segment spans residues 652-672 (VLVVVWCFVLLILTQSYTATL). The Extracellular segment spans residues 673 to 832 (TSMLTVQELR…DSPIRLDHHS (160 aa)). Asparagine 795 carries N-linked (GlcNAc...) asparagine glycosylation. A helical membrane pass occupies residues 833–853 (FEALFTIVFVVSMLLLLAMLV). At 854 to 967 (CRRYRQESKS…AALFSRIKSA (114 aa)) the chain is on the cytoplasmic side. Over residues 864 to 874 (GEINANNSPTD) the composition is skewed to polar residues. Residues 864 to 913 (GEINANNSPTDGNMRAPPNQPTDDNMRAPTSPPIDDQVLEPPGPALNEAD) are disordered.

It belongs to the glutamate-gated ion channel (TC 1.A.10.1) family. In terms of assembly, may form heteromers. As to expression, expressed predominantly in roots.

It is found in the membrane. In terms of biological role, glutamate-gated receptor that probably acts as a non-selective cation channel. May be involved in light-signal transduction and calcium homeostasis via the regulation of calcium influx into cells. This Arabidopsis thaliana (Mouse-ear cress) protein is Glutamate receptor 2.6 (GLR2.6).